The following is a 60-amino-acid chain: Mastoparan-A (60 aa).

The signal sequence occupies residues 1-27 (MKNTILILFTAFIALLGFFGMSAEALA). AXPX repeat units lie at residues 27–30 (ADPI), 31–34 (ADPL), 35–38 (AGPN), and 41–43 (ADP). Residues 28–45 (DPIADPLAGPNAEADPEA) constitute a propeptide that is removed on maturation. Isoleucine 59 carries the isoleucine amide modification.

It belongs to the MCD family. Mastoparan subfamily. As to expression, expressed by the venom gland.

The protein resides in the secreted. The protein localises to the target cell membrane. Antimicrobial and mast cell degranulating peptide. Has broad spectrum antibacterial activity against both Gram-positive and Gram-negative bacteria (S.aureus MIC=32-64 ug/ml, S.xylosus MIC=2 ug/ml, S.alactolyticus MIC=12 ug/ml, C.koseri MIC=4 ug/ml, E.coli MIC=8 ug/ml, K.pneumoniae MIC=32 ug/ml, P.aerugiosa MIC=192 ug/ml, S.choleraesuis MIC=32 ug/ml, S.typhimurium MIC=32 ug/ml, V.parahamelytics MIC=16 ug/ml). Affects membrane permeability of E.coli. Shows hemolytic activities on sheep, chicken and human erythrocytes. Its mast cell degranulation activity may be related to the activation of G-protein coupled receptors in mast cells as well as interaction with other proteins located in cell endosomal membranes in the mast cells. The chain is Mastoparan-A from Vespa analis (Yellow-vented hornet).